A 228-amino-acid chain; its full sequence is 5'-methylthioadenosine/S-adenosylhomocysteine nucleosidase (228 aa).

E11 acts as the Proton acceptor in catalysis. Substrate contacts are provided by residues G77, I151, and M172–E173. The active-site Proton donor is D196.

Belongs to the PNP/UDP phosphorylase family. MtnN subfamily.

The catalysed reaction is S-adenosyl-L-homocysteine + H2O = S-(5-deoxy-D-ribos-5-yl)-L-homocysteine + adenine. The enzyme catalyses S-methyl-5'-thioadenosine + H2O = 5-(methylsulfanyl)-D-ribose + adenine. It carries out the reaction 5'-deoxyadenosine + H2O = 5-deoxy-D-ribose + adenine. It functions in the pathway amino-acid biosynthesis; L-methionine biosynthesis via salvage pathway; S-methyl-5-thio-alpha-D-ribose 1-phosphate from S-methyl-5'-thioadenosine (hydrolase route): step 1/2. Functionally, catalyzes the irreversible cleavage of the glycosidic bond in both 5'-methylthioadenosine (MTA) and S-adenosylhomocysteine (SAH/AdoHcy) to adenine and the corresponding thioribose, 5'-methylthioribose and S-ribosylhomocysteine, respectively. Also cleaves 5'-deoxyadenosine, a toxic by-product of radical S-adenosylmethionine (SAM) enzymes, into 5-deoxyribose and adenine. The protein is 5'-methylthioadenosine/S-adenosylhomocysteine nucleosidase of Staphylococcus carnosus (strain TM300).